The following is a 346-amino-acid chain: Holliday junction branch migration complex subunit RuvB (346 aa).

Positions M1–A11 are enriched in polar residues. The disordered stretch occupies residues M1–A20. The large ATPase domain (RuvB-L) stretch occupies residues M1 to Y183. ATP-binding positions include I22, R23, G64, K67, T68, T69, E130–F132, R173, Y183, and R220. T68 serves as a coordination point for Mg(2+). A small ATPAse domain (RuvB-S) region spans residues S184–K254. The head domain (RuvB-H) stretch occupies residues P257–F346. DNA is bound by residues R293, R312, and R317.

It belongs to the RuvB family. Homohexamer. Forms an RuvA(8)-RuvB(12)-Holliday junction (HJ) complex. HJ DNA is sandwiched between 2 RuvA tetramers; dsDNA enters through RuvA and exits via RuvB. An RuvB hexamer assembles on each DNA strand where it exits the tetramer. Each RuvB hexamer is contacted by two RuvA subunits (via domain III) on 2 adjacent RuvB subunits; this complex drives branch migration. In the full resolvosome a probable DNA-RuvA(4)-RuvB(12)-RuvC(2) complex forms which resolves the HJ.

The protein localises to the cytoplasm. It catalyses the reaction ATP + H2O = ADP + phosphate + H(+). Functionally, the RuvA-RuvB-RuvC complex processes Holliday junction (HJ) DNA during genetic recombination and DNA repair, while the RuvA-RuvB complex plays an important role in the rescue of blocked DNA replication forks via replication fork reversal (RFR). RuvA specifically binds to HJ cruciform DNA, conferring on it an open structure. The RuvB hexamer acts as an ATP-dependent pump, pulling dsDNA into and through the RuvAB complex. RuvB forms 2 homohexamers on either side of HJ DNA bound by 1 or 2 RuvA tetramers; 4 subunits per hexamer contact DNA at a time. Coordinated motions by a converter formed by DNA-disengaged RuvB subunits stimulates ATP hydrolysis and nucleotide exchange. Immobilization of the converter enables RuvB to convert the ATP-contained energy into a lever motion, pulling 2 nucleotides of DNA out of the RuvA tetramer per ATP hydrolyzed, thus driving DNA branch migration. The RuvB motors rotate together with the DNA substrate, which together with the progressing nucleotide cycle form the mechanistic basis for DNA recombination by continuous HJ branch migration. Branch migration allows RuvC to scan DNA until it finds its consensus sequence, where it cleaves and resolves cruciform DNA. The chain is Holliday junction branch migration complex subunit RuvB from Xanthomonas campestris pv. campestris (strain ATCC 33913 / DSM 3586 / NCPPB 528 / LMG 568 / P 25).